We begin with the raw amino-acid sequence, 329 residues long: DNA-directed RNA polymerase subunit alpha (329 aa).

The interval 1-235 is alpha N-terminal domain (alpha-NTD); it reads MQGSVTEFLK…EQLEAFVDLR (235 aa). The tract at residues 249–329 is alpha C-terminal domain (alpha-CTD); it reads FDPILLRPVD…DWPPASIADE (81 aa).

Belongs to the RNA polymerase alpha chain family. In terms of assembly, homodimer. The RNAP catalytic core consists of 2 alpha, 1 beta, 1 beta' and 1 omega subunit. When a sigma factor is associated with the core the holoenzyme is formed, which can initiate transcription.

It carries out the reaction RNA(n) + a ribonucleoside 5'-triphosphate = RNA(n+1) + diphosphate. Functionally, DNA-dependent RNA polymerase catalyzes the transcription of DNA into RNA using the four ribonucleoside triphosphates as substrates. The polypeptide is DNA-directed RNA polymerase subunit alpha (Salmonella choleraesuis (strain SC-B67)).